Here is a 1285-residue protein sequence, read N- to C-terminus: Nuclear pore complex protein NUP133 (1285 aa).

Disordered regions lie at residues 1–53 and 522–580; these read MFSP…PAPW and EPPE…QTAR. The span at 31–41 shows a compositional bias: polar residues; that stretch reads TPATQNRNNFI. Composition is skewed to basic and acidic residues over residues 523–544 and 553–569; these read PPER…DETR and TAGR…DKGN.

This sequence belongs to the nucleoporin Nup133 family. Part of the nuclear pore complex (NPC). The NPC has an eight-fold symmetrical structure comprising a central transport channel and two rings, the cytoplasmic and nuclear rings, to which eight filaments are attached. The cytoplasmic filaments have loose ends, while the nuclear filaments are joined in a distal ring, forming a nuclear basket. NPCs are highly dynamic in configuration and composition, and can be devided in 3 subcomplexes, the NUP62 subcomplex, the NUP107-160 subcomplex and the NUP93 subcomplex, containing approximately 30 different nucleoporin proteins.

It localises to the nucleus envelope. Its subcellular location is the nucleus. The protein localises to the nuclear pore complex. The polypeptide is Nuclear pore complex protein NUP133 (Arabidopsis thaliana (Mouse-ear cress)).